Consider the following 733-residue polypeptide: DNA repair and recombination protein RAD54-like (733 aa).

The interval 1-35 (LAKRKAGGEEEDGEWRPPATQKRQKAGSEAESADC) is disordered. The Helicase ATP-binding domain occupies 159–334 (SRRIPGSHGC…FSLVHFVNSG (176 aa)). Position 172–179 (172–179 (DEMGLGKT)) interacts with ATP. A DEGH box motif is present at residues 285–288 (DEGH). Residues 488–642 (LVLDYILAVT…CVVDEEQDVE (155 aa)) form the Helicase C-terminal domain. K504 bears the N6-acetyllysine mark. S561 carries the phosphoserine; by NEK1 modification.

Belongs to the SNF2/RAD54 helicase family. Homohexamer. Interacts (via N-terminus) with RAD51. Interacts with NAP1L1. Interacts with BRD9; this interaction orchestrates RAD51-RAD54 complex formation. Acetylated. Acetylation promotes interaction with BRD9, and subsequently with RAD54, which is essential for homologous recombination (HR). Post-translationally, phosphorylated. Phosphorylation at Ser-561 by NEK1 specifically in G2 phase allows efficient removal of RAD51 filaments from DNA. In terms of tissue distribution, highly expressed in bursa, thymus, testis, and ovary. Low level of expression seen in all other organs tested.

The protein resides in the nucleus. In terms of biological role, plays an essential role in homologous recombination (HR) which is a major pathway for repairing DNA double-strand breaks (DSBs), single-stranded DNA (ssDNA) gaps, and stalled or collapsed replication forks. Acts as a molecular motor during the homology search and guides RAD51 ssDNA along a donor dsDNA thereby changing the homology search from the diffusion-based mechanism to a motor-guided mechanism. Plays also an essential role in RAD51-mediated synaptic complex formation which consists of three strands encased in a protein filament formed once homology is recognized. Once DNA strand exchange occured, dissociates RAD51 from nucleoprotein filaments formed on dsDNA. The sequence is that of DNA repair and recombination protein RAD54-like (RAD54L) from Gallus gallus (Chicken).